Consider the following 212-residue polypeptide: Glutathione S-transferase P 1 (212 aa).

In terms of domain architecture, GST N-terminal spans 2-83 (PGYVLTYFPV…YLGNKHGLTG (82 aa)). Glutathione contacts are provided by residues Y8, R14, W39, K47, 54 to 55 (QL), and 67 to 68 (QS). Residues 85-206 (NDEERGHIDM…KSDARNKRPI (122 aa)) form the GST C-terminal domain.

The protein belongs to the GST superfamily. Pi family. In terms of assembly, homodimer. In terms of tissue distribution, expressed only in embryos. Not expressed in liver, lung, heart, kidney and ovary.

It localises to the cytoplasm. The protein resides in the mitochondrion. Its subcellular location is the nucleus. The catalysed reaction is RX + glutathione = an S-substituted glutathione + a halide anion + H(+). Its function is as follows. Conjugation of reduced glutathione to a wide number of exogenous and endogenous hydrophobic electrophiles. Highly active towards 1-chloro-2,4-dinitrobenzene and organic isothiocyanates, but shows no detectable activity towards 1,2-dichloro-4-nitrobenzene, p-nitrobenzylchloride, trans-4-phenyl-3-buten-2-one (tPBO) and ethacrynic acid. May be associated with cellular proliferation. In Xenopus laevis (African clawed frog), this protein is Glutathione S-transferase P 1 (gstp1).